A 67-amino-acid chain; its full sequence is Beta-defensin 36 (67 aa).

An N-terminal signal peptide occupies residues 1–22; sequence MKLLLLTLAALLLVSQLTPGDA. 3 disulfides stabilise this stretch: Cys-25-Cys-52, Cys-32-Cys-46, and Cys-36-Cys-53.

Belongs to the beta-defensin family.

It is found in the secreted. Functionally, has antibacterial activity. This Mus musculus (Mouse) protein is Beta-defensin 36 (Defb36).